We begin with the raw amino-acid sequence, 165 residues long: Sorting nexin-12 (165 aa).

The interval 1-20 is disordered; the sequence is MSDTAVADTRRLNSKPQDLT. Ser-2 bears the N-acetylserine mark. Tyr-23 is subject to Phosphotyrosine. In terms of domain architecture, PX spans 28-151; sequence NFLEIDIFNP…HMFLQEEAID (124 aa). The a 1,2-diacyl-sn-glycero-3-phospho-(1D-myo-inositol-3-phosphate) site is built by Arg-71, Ser-73, Lys-96, and Arg-118. Phosphoserine is present on Ser-73.

It belongs to the sorting nexin family.

It is found in the membrane. Functionally, may be involved in several stages of intracellular trafficking. In Mus musculus (Mouse), this protein is Sorting nexin-12 (Snx12).